The following is a 1419-amino-acid chain: Collagen alpha-1(II) chain (1419 aa).

An N-terminal signal peptide occupies residues 1 to 25 (MIRLGAPQSLVLLTLLIATVLQCQG). Positions 26 to 113 (QDARKLGPKG…PGLGGGNFAA (88 aa)) are cleaved as a propeptide — N-terminal propeptide. The disordered stretch occupies residues 28-1168 (ARKLGPKGQK…GQREKGPDPL (1141 aa)). 2 stretches are compositionally biased toward basic and acidic residues: residues 36–47 (QKGEPGDIKDII) and 64–85 (PRGDRGDKGERGAPGPRGRDGE). Residues 89–104 (PGNPGPPGPPGPPGPP) show a composition bias toward pro residues. Lysine 122 is subject to 5-hydroxylysine. O-linked (Gal...) hydroxylysine glycosylation is present at lysine 122. The segment covering 124 to 135 (GGAQMGVMQGPM) has biased composition (low complexity). The tract at residues 133–1146 (GPMGPMGPRG…PGPPGPPGPP (1014 aa)) is triple-helical region. The span at 140-149 (PRGPPGPAGA) shows a compositional bias: pro residues. The span at 150-171 (PGPQGFQGNPGEPGEPGVSGPI) shows a compositional bias: low complexity. Residues 183-197 (PGDDGEAGKPGKAGE) show a composition bias toward basic and acidic residues. Residues lysine 219, lysine 231, and lysine 240 each carry the 5-hydroxylysine modification. Lysine 219, lysine 231, and lysine 240 each carry an O-linked (Gal...) hydroxylysine glycan. Low complexity-rich tracts occupy residues 242–252 (ESGSPGENGSP) and 267–282 (TGPAGAAGARGNDGQP). Gly residues predominate over residues 292–301 (GPAGGPGFLG). The residue at position 306 (lysine 306) is a 5-hydroxylysine. Lysine 306 carries an O-linked (Gal...) hydroxylysine glycan. Low complexity predominate over residues 335–363 (PAGASGNPGTDGIPGAKGSAGAPGIAGAP). Pro residues predominate over residues 365-374 (FPGPRGPPGP). Positions 404-417 (ETGPAGPQGAPGPA) are enriched in low complexity. Lysine 540 and lysine 552 each carry 5-hydroxylysine. Lysine 540 and lysine 552 each carry an O-linked (Gal...) hydroxylysine glycan. Residues 554-563 (LAGAPGLRGL) are compositionally biased toward low complexity. 4-hydroxyproline is present on residues proline 591 and proline 600. Proline 602 carries the 3-hydroxyproline; partial modification. 4-hydroxyproline occurs at positions 603 and 606. Low complexity predominate over residues 638 to 668 (ERGSPGAQGLQGPRGLPGTPGTDGPKGAAGP). The segment covering 696–707 (KGDRGDVGEKGP) has biased composition (basic and acidic residues). Composition is skewed to low complexity over residues 765-780 (AGFAGPPGADGQPGAK) and 809-846 (PTGVTGPKGARGAQGPPGATGFPGAAGRVGPPGSNGNP). Proline 839 is modified (3-hydroxyproline; partial). A 4-hydroxyproline mark is found at proline 840, proline 846, and proline 852. A compositionally biased stretch (pro residues) spans 1001 to 1011 (APGPPGSPGPA). A compositionally biased stretch (basic and acidic residues) spans 1047-1061 (RGDKGEAGEPGERGL). A 3-hydroxyproline; partial modification is found at proline 1076. 2 stretches are compositionally biased toward low complexity: residues 1080–1089 (SGDQGTSGPA) and 1103–1113 (PSGKDGSNGIP). Proline 1113 is subject to 4-hydroxyproline. Proline 1118 is subject to 3-hydroxyproline. Proline 1119 bears the 4-hydroxyproline mark. A compositionally biased stretch (pro residues) spans 1131–1148 (AGPPGNPGPPGPPGPPGP). Proline 1133 is subject to 3-hydroxyproline; partial. 4-hydroxyproline occurs at positions 1134 and 1137. Proline 1139 carries the post-translational modification 3-hydroxyproline; partial. 4-hydroxyproline is present on residues proline 1140 and proline 1143. 3-hydroxyproline; partial is present on proline 1145. Proline 1146 is modified (4-hydroxyproline). The nonhelical region (C-terminal) stretch occupies residues 1147–1173 (GPGIDMSAFAGLGQREKGPDPLQYMRA). Positions 1185-1419 (VEVDATLKSL…GVDIGPVCFL (235 aa)) constitute a Fibrillar collagen NC1 domain. 3 disulfide bridges follow: cysteine 1215/cysteine 1247, cysteine 1255/cysteine 1417, and cysteine 1325/cysteine 1370. Residues aspartate 1233, asparagine 1235, glutamine 1236, cysteine 1238, and aspartate 1241 each coordinate Ca(2+). Asparagine 1320 carries N-linked (GlcNAc...) asparagine glycosylation.

This sequence belongs to the fibrillar collagen family. In terms of assembly, homotrimers of alpha 1(II) chains. In terms of processing, contains mostly 4-hydroxyproline. Prolines at the third position of the tripeptide repeating unit (G-X-P) are 4-hydroxylated in some or all of the chains. Post-translationally, contains 3-hydroxyproline at a few sites. This modification occurs on the first proline residue in the sequence motif Gly-Pro-Hyp, where Hyp is 4-hydroxyproline. Lysine residues at the third position of the tripeptide repeating unit (G-X-Y) are 5-hydroxylated in some or all of the chains. In terms of processing, O-glycosylated on hydroxylated lysine residues. The O-linked glycan consists of a Glc-Gal disaccharide. As to expression, expressed in chondrocytes.

It is found in the secreted. The protein resides in the extracellular space. Its subcellular location is the extracellular matrix. In terms of biological role, type II collagen is specific for cartilaginous tissues. It is essential for the normal embryonic development of the skeleton, for linear growth and for the ability of cartilage to resist compressive forces. In Rattus norvegicus (Rat), this protein is Collagen alpha-1(II) chain.